The following is a 330-amino-acid chain: Ubiquinone biosynthesis protein COQ4, mitochondrial (330 aa).

A mitochondrion-targeting transit peptide spans 1–31 (MLQSTKVTKSVLTNVLRVEQRRGFLLSGAAV). 4 residues coordinate Zn(2+): histidine 212, aspartate 213, histidine 216, and glutamate 228.

The protein belongs to the COQ4 family. As to quaternary structure, component of a multi-subunit COQ enzyme complex, composed of at least COQ3, COQ4, COQ5, COQ6, COQ7 and COQ9. It depends on Zn(2+) as a cofactor.

The protein resides in the mitochondrion inner membrane. The catalysed reaction is a 4-hydroxy-3-methoxy-5-(all-trans-polyprenyl)benzoate + H(+) = a 2-methoxy-6-(all-trans-polyprenyl)phenol + CO2. It participates in cofactor biosynthesis; ubiquinone biosynthesis. Functionally, lyase that catalyzes the C1-decarboxylation of 4-hydroxy-3-methoxy-5-(all-trans-polyprenyl)benzoic acid into 2-methoxy-6-(all-trans-polyprenyl)phenol during ubiquinone biosynthesis. In Candida glabrata (strain ATCC 2001 / BCRC 20586 / JCM 3761 / NBRC 0622 / NRRL Y-65 / CBS 138) (Yeast), this protein is Ubiquinone biosynthesis protein COQ4, mitochondrial.